The following is a 69-amino-acid chain: Ferredoxin-1 (69 aa).

Cysteine 12, cysteine 18, and cysteine 57 together coordinate [3Fe-4S] cluster.

It depends on [3Fe-4S] cluster as a cofactor.

Functionally, electron transport protein for the cytochrome P-450-SU1 system. The chain is Ferredoxin-1 (suaB) from Streptomyces griseolus.